The primary structure comprises 215 residues: Probable phosphoglycerate mutase GpmB (215 aa).

Residues 8–15 (RHGETQWN), 21–22 (QG), Arg58, Lys60, 82–85 (ELDM), 104–105 (RR), and 151–152 (GI) contribute to the substrate site. His9 acts as the Tele-phosphohistidine intermediate in catalysis. The active-site Proton donor/acceptor is the Glu82.

This sequence belongs to the phosphoglycerate mutase family. GpmB subfamily.

The enzyme catalyses (2R)-2-phosphoglycerate = (2R)-3-phosphoglycerate. It participates in carbohydrate degradation; glycolysis; pyruvate from D-glyceraldehyde 3-phosphate: step 3/5. This is Probable phosphoglycerate mutase GpmB from Salmonella paratyphi A (strain AKU_12601).